The primary structure comprises 665 residues: RNA-directed RNA polymerase (665 aa).

The RdRp catalytic domain occupies 310 to 485 (NKEEKVKEWS…LKEGKVNPSP (176 aa)). Asp-454, Tyr-491, and Gly-495 together coordinate Mg(2+).

In terms of assembly, part of the packaging complex composed of RDRP, P4 and P7. Interacts with P7. Requires Mg(2+) as cofactor. Mn(2+) serves as cofactor.

It is found in the virion. The enzyme catalyses RNA(n) + a ribonucleoside 5'-triphosphate = RNA(n+1) + diphosphate. Functionally, rna-dependent RNA polymerase part of the packaging complex that packages the viral RNA segments, replicate them into a double-stranded form and transcribe them. This is RNA-directed RNA polymerase (P2) from Pseudomonas phage phi6 (Bacteriophage phi-6).